A 144-amino-acid chain; its full sequence is Ferredoxin-thioredoxin reductase catalytic chain, chloroplastic (144 aa).

A chloroplast-targeting transit peptide spans 1 to 31; that stretch reads MTTQASTFAVAVPSVATPFRRHRNPFVVRAQ. [4Fe-4S] cluster is bound at residue Cys83. Cys85 acts as the Nucleophile in catalysis. A disulfide bond links Cys85 and Cys115. The [4Fe-4S] cluster site is built by Cys102, Cys104, and Cys113.

The protein belongs to the ferredoxin thioredoxin reductase beta subunit family. As to quaternary structure, heterodimer of subunit A (variable subunit) and subunit B (catalytic subunit). Heterodimeric FTR forms a complex with ferredoxin and thioredoxin. [4Fe-4S] cluster serves as cofactor.

Its subcellular location is the plastid. The protein localises to the chloroplast. It catalyses the reaction [thioredoxin]-disulfide + 2 reduced [2Fe-2S]-[ferredoxin] + 2 H(+) = [thioredoxin]-dithiol + 2 oxidized [2Fe-2S]-[ferredoxin]. In terms of biological role, catalytic subunit of the ferredoxin-thioredoxin reductase (FTR), which catalyzes the two-electron reduction of thioredoxins by the electrons provided by reduced ferredoxin. In Glycine max (Soybean), this protein is Ferredoxin-thioredoxin reductase catalytic chain, chloroplastic (FTRC).